We begin with the raw amino-acid sequence, 259 residues long: Hydroxyethylthiazole kinase (259 aa).

Methionine 50 serves as a coordination point for substrate. Positions 122 and 168 each coordinate ATP. Glycine 195 is a substrate binding site.

It belongs to the Thz kinase family. The cofactor is Mg(2+).

The enzyme catalyses 5-(2-hydroxyethyl)-4-methylthiazole + ATP = 4-methyl-5-(2-phosphooxyethyl)-thiazole + ADP + H(+). It functions in the pathway cofactor biosynthesis; thiamine diphosphate biosynthesis; 4-methyl-5-(2-phosphoethyl)-thiazole from 5-(2-hydroxyethyl)-4-methylthiazole: step 1/1. In terms of biological role, catalyzes the phosphorylation of the hydroxyl group of 4-methyl-5-beta-hydroxyethylthiazole (THZ). The sequence is that of Hydroxyethylthiazole kinase from Escherichia coli O127:H6 (strain E2348/69 / EPEC).